The sequence spans 355 residues: Sesquiterpene synthase-like protein Agr11 (355 aa).

Belongs to the terpene synthase family.

The chain is Sesquiterpene synthase-like protein Agr11 from Cyclocybe aegerita (Black poplar mushroom).